The chain runs to 400 residues: NADH dehydrogenase-like protein Rv1812c (400 aa).

This sequence belongs to the NADH dehydrogenase family. FAD serves as cofactor.

The polypeptide is NADH dehydrogenase-like protein Rv1812c (Mycobacterium tuberculosis (strain ATCC 25618 / H37Rv)).